Consider the following 482-residue polypeptide: ATP synthase subunit beta (482 aa).

168 to 175 contacts ATP; that stretch reads GGAGVGKT.

It belongs to the ATPase alpha/beta chains family. F-type ATPases have 2 components, CF(1) - the catalytic core - and CF(0) - the membrane proton channel. CF(1) has five subunits: alpha(3), beta(3), gamma(1), delta(1), epsilon(1). CF(0) has three main subunits: a(1), b(2) and c(9-12). The alpha and beta chains form an alternating ring which encloses part of the gamma chain. CF(1) is attached to CF(0) by a central stalk formed by the gamma and epsilon chains, while a peripheral stalk is formed by the delta and b chains.

It localises to the cell membrane. The catalysed reaction is ATP + H2O + 4 H(+)(in) = ADP + phosphate + 5 H(+)(out). In terms of biological role, produces ATP from ADP in the presence of a proton gradient across the membrane. The catalytic sites are hosted primarily by the beta subunits. In Nocardia farcinica (strain IFM 10152), this protein is ATP synthase subunit beta.